The primary structure comprises 228 residues: Triosephosphate isomerase (228 aa).

12-14 (NFK) lines the substrate pocket. H96 functions as the Electrophile in the catalytic mechanism. Catalysis depends on E144, which acts as the Proton acceptor. Substrate is bound by residues I149, G184, and 205-206 (AS).

It belongs to the triosephosphate isomerase family. In terms of assembly, homotetramer; dimer of dimers.

It localises to the cytoplasm. It catalyses the reaction D-glyceraldehyde 3-phosphate = dihydroxyacetone phosphate. The protein operates within carbohydrate biosynthesis; gluconeogenesis. Its pathway is carbohydrate degradation; glycolysis; D-glyceraldehyde 3-phosphate from glycerone phosphate: step 1/1. Functionally, involved in the gluconeogenesis. Catalyzes stereospecifically the conversion of dihydroxyacetone phosphate (DHAP) to D-glyceraldehyde-3-phosphate (G3P). The protein is Triosephosphate isomerase of Pyrococcus furiosus (strain ATCC 43587 / DSM 3638 / JCM 8422 / Vc1).